The sequence spans 101 residues: Small ribosomal subunit protein uS14 (101 aa).

It belongs to the universal ribosomal protein uS14 family. As to quaternary structure, part of the 30S ribosomal subunit. Contacts proteins S3 and S10.

Binds 16S rRNA, required for the assembly of 30S particles and may also be responsible for determining the conformation of the 16S rRNA at the A site. The sequence is that of Small ribosomal subunit protein uS14 from Klebsiella pneumoniae (strain 342).